The primary structure comprises 149 residues: Nucleoside diphosphate kinase (149 aa).

ATP-binding residues include K9, F57, R85, T91, R102, and N112. The Pros-phosphohistidine intermediate role is filled by H115.

The protein belongs to the NDK family. Homotetramer. The cofactor is Mg(2+).

It is found in the cytoplasm. The enzyme catalyses a 2'-deoxyribonucleoside 5'-diphosphate + ATP = a 2'-deoxyribonucleoside 5'-triphosphate + ADP. The catalysed reaction is a ribonucleoside 5'-diphosphate + ATP = a ribonucleoside 5'-triphosphate + ADP. In terms of biological role, major role in the synthesis of nucleoside triphosphates other than ATP. The ATP gamma phosphate is transferred to the NDP beta phosphate via a ping-pong mechanism, using a phosphorylated active-site intermediate. This is Nucleoside diphosphate kinase from Herpetosiphon aurantiacus (strain ATCC 23779 / DSM 785 / 114-95).